We begin with the raw amino-acid sequence, 580 residues long: MVMLLRARCFQRLAIPDPMRVLYKDYRTATPQNFSNYESMKQDFKIEIPEYFNFAKDVLDQWTNMEKAGKRLSNPAFWWIDGNGEELRWSFEELGLLSRKFANILTEACSLQRGDRVMVILPKIPEWWLANVACLRTGTVLIPGTTQLTQKDILYRLQSSKAKCIITDDTLAPAVDAVAAKCENLHSKLIVSQHSREGWGNLKEMMKYASDSHTCVDTKHDEMMAIYFTSGTTGPPKMIGHTHSSFGLGLSVNGRFWLDLIASDVMWNTSDTGWAKSAWSSVFSPWTQGACVFAHYLPRFESTSILQTLSKFPITVFCSAPTAYRMLVQNDMSSYKFNSLKHCVSAGEPINPEVMEQWRKKTGLDIYEGYGQTETVLICGNFKGMKIKPGSMGKPSPAFDVKILDENGATLPPGQEGDIALQVLPERPFGLFTHYVDNPSKTASTLRGSFYITGDRGYMDEDGYFWFVARSDDIILSSGYRIGPFEVESALIEHPSIAESAVVSSPDPIRGEVVKAFIVLNPDYKSHDQEQLKKEIQEHVKKTTAPYKYPRKVEFIEELPKTVSGKVKRNELRKKEWVTT.

The N-terminal 21 residues, 1 to 21, are a transit peptide targeting the mitochondrion; the sequence is MVMLLRARCFQRLAIPDPMRV. K67 and K100 each carry N6-succinyllysine. K151 is modified (N6-acetyllysine). ATP-binding positions include 229-237, 368-373, D455, R470, and K566; these read TSGTTGPPK and EGYGQT.

The protein belongs to the ATP-dependent AMP-binding enzyme family. The cofactor is Mg(2+). Requires Mn(2+) as cofactor. As to expression, detected in kidney (at protein level). Detected in kidney proximal tubules and in liver. Detected at low levels in testis, stomach, heart and lung.

It is found in the mitochondrion. The protein localises to the mitochondrion matrix. It carries out the reaction a medium-chain fatty acid + ATP + CoA = a medium-chain fatty acyl-CoA + AMP + diphosphate. It catalyses the reaction propanoate + ATP + CoA = propanoyl-CoA + AMP + diphosphate. The enzyme catalyses butanoate + ATP + CoA = butanoyl-CoA + AMP + diphosphate. The catalysed reaction is 2-methylpropanoate + ATP + CoA = 2-methylpropanoyl-CoA + AMP + diphosphate. It carries out the reaction 2-methylbutanoate + ATP + CoA = 2-methylbutanoyl-CoA + AMP + diphosphate. It catalyses the reaction octanoate + ATP + CoA = octanoyl-CoA + AMP + diphosphate. In terms of biological role, catalyzes the activation of fatty acids by CoA to produce an acyl-CoA, the first step in fatty acid metabolism. Capable of activating medium-chain fatty acids with a preference for isobutyrate among fatty acids with 2-6 carbon atoms. In Mus musculus (Mouse), this protein is Acyl-coenzyme A synthetase ACSM3, mitochondrial (Acsm3).